Reading from the N-terminus, the 356-residue chain is Branched-chain-amino-acid aminotransferase 6 (356 aa).

Residue K199 is modified to N6-(pyridoxal phosphate)lysine.

Belongs to the class-IV pyridoxal-phosphate-dependent aminotransferase family. It depends on pyridoxal 5'-phosphate as a cofactor.

The protein localises to the cytoplasm. The catalysed reaction is L-leucine + 2-oxoglutarate = 4-methyl-2-oxopentanoate + L-glutamate. It carries out the reaction L-isoleucine + 2-oxoglutarate = (S)-3-methyl-2-oxopentanoate + L-glutamate. It catalyses the reaction L-valine + 2-oxoglutarate = 3-methyl-2-oxobutanoate + L-glutamate. It functions in the pathway amino-acid biosynthesis; L-isoleucine biosynthesis; L-isoleucine from 2-oxobutanoate: step 4/4. The protein operates within amino-acid biosynthesis; L-leucine biosynthesis; L-leucine from 3-methyl-2-oxobutanoate: step 4/4. Its pathway is amino-acid biosynthesis; L-valine biosynthesis; L-valine from pyruvate: step 4/4. Functionally, converts 2-oxo acids to branched-chain amino acids. Acts on leucine, isoleucine and valine. This Arabidopsis thaliana (Mouse-ear cress) protein is Branched-chain-amino-acid aminotransferase 6 (BCAT6).